Reading from the N-terminus, the 362-residue chain is 3-ketodihydrosphingosine reductase gsl-3 (362 aa).

NADP(+) is bound at residue Leu55. The NADPH site is built by Gly58, Ser60, Gly62, and Arg83. Positions 58 to 62 match the GXSXG motif; sequence GASEG. Asn84 contacts NADP(+). Residues Arg87 and Asp113 each coordinate NADPH. NADP(+) contacts are provided by Asp113, Arg176, Tyr216, Lys220, Ile252, and Ser254. Tyr216 acts as the Proton acceptor in catalysis. Lys220 acts as the Lowers pKa of active site Tyr in catalysis. A helical membrane pass occupies residues 318 to 338; that stretch reads NNWVLDTLMGWLIPIIYFFVL.

The protein belongs to the short-chain dehydrogenases/reductases (SDR) family.

The protein resides in the endoplasmic reticulum membrane. It carries out the reaction sphinganine + NADP(+) = 3-oxosphinganine + NADPH + H(+). It participates in lipid metabolism; sphingolipid metabolism. In terms of biological role, catalyzes the reduction of 3'-oxosphinganine (3-ketodihydrosphingosine/KDS) to sphinganine (dihydrosphingosine/DHS), the second step of de novo sphingolipid biosynthesis. The sequence is that of 3-ketodihydrosphingosine reductase gsl-3 (gsl-3) from Neurospora crassa (strain ATCC 24698 / 74-OR23-1A / CBS 708.71 / DSM 1257 / FGSC 987).